Consider the following 211-residue polypeptide: Thiamine-phosphate synthase (211 aa).

4-amino-2-methyl-5-(diphosphooxymethyl)pyrimidine contacts are provided by residues 37-41 (QLRIK) and N69. Mg(2+)-binding residues include D70 and D89. S108 is a 4-amino-2-methyl-5-(diphosphooxymethyl)pyrimidine binding site. 2-[(2R,5Z)-2-carboxy-4-methylthiazol-5(2H)-ylidene]ethyl phosphate is bound at residue 134–136 (TQT). Residue K137 coordinates 4-amino-2-methyl-5-(diphosphooxymethyl)pyrimidine. 2-[(2R,5Z)-2-carboxy-4-methylthiazol-5(2H)-ylidene]ethyl phosphate is bound by residues G166 and 186 to 187 (VS).

Belongs to the thiamine-phosphate synthase family. Mg(2+) is required as a cofactor.

It catalyses the reaction 2-[(2R,5Z)-2-carboxy-4-methylthiazol-5(2H)-ylidene]ethyl phosphate + 4-amino-2-methyl-5-(diphosphooxymethyl)pyrimidine + 2 H(+) = thiamine phosphate + CO2 + diphosphate. It carries out the reaction 2-(2-carboxy-4-methylthiazol-5-yl)ethyl phosphate + 4-amino-2-methyl-5-(diphosphooxymethyl)pyrimidine + 2 H(+) = thiamine phosphate + CO2 + diphosphate. The catalysed reaction is 4-methyl-5-(2-phosphooxyethyl)-thiazole + 4-amino-2-methyl-5-(diphosphooxymethyl)pyrimidine + H(+) = thiamine phosphate + diphosphate. It functions in the pathway cofactor biosynthesis; thiamine diphosphate biosynthesis; thiamine phosphate from 4-amino-2-methyl-5-diphosphomethylpyrimidine and 4-methyl-5-(2-phosphoethyl)-thiazole: step 1/1. Condenses 4-methyl-5-(beta-hydroxyethyl)thiazole monophosphate (THZ-P) and 2-methyl-4-amino-5-hydroxymethyl pyrimidine pyrophosphate (HMP-PP) to form thiamine monophosphate (TMP). The protein is Thiamine-phosphate synthase of Salmonella paratyphi A (strain ATCC 9150 / SARB42).